A 406-amino-acid chain; its full sequence is Peptidase T (406 aa).

His78 contributes to the Zn(2+) binding site. Asp80 is a catalytic residue. Asp139 lines the Zn(2+) pocket. The active-site Proton acceptor is Glu173. Zn(2+) contacts are provided by Glu174, Asp196, and His378.

It belongs to the peptidase M20B family. The cofactor is Zn(2+).

It is found in the cytoplasm. It catalyses the reaction Release of the N-terminal residue from a tripeptide.. Functionally, cleaves the N-terminal amino acid of tripeptides. This Clostridium perfringens (strain ATCC 13124 / DSM 756 / JCM 1290 / NCIMB 6125 / NCTC 8237 / Type A) protein is Peptidase T.